A 204-amino-acid chain; its full sequence is Oocyte-specific homeobox protein 1 (204 aa).

Residues Glu-28–Gly-73 form a disordered region. 2 stretches are compositionally biased toward polar residues: residues Met-37–Ser-54 and Lys-62–Ser-72. A DNA-binding region (homeobox) is located at residues Phe-94–Asn-153.

It belongs to the paired homeobox family. Obox subfamily. As to expression, specifically expressed in oocytes and early embryos.

It is found in the nucleus. Transcription factor required for zygotic genome activation (ZGA), a critical event in early embryonic development during which the developmental control passes from maternally provided mRNAs to the expression of the zygotic genome after fertilization. Together with other Obox family members, required in early two-cell stage embryos to kick-start the major ZGA wave by facilitating RNA Polymerase II 'pre-configuration', during which RNA Polymerase II relocates from the initial one-cell stage binding targets to ZGA gene promoters and distal enhancers. Mechanistically, promotes recruitment of RNA Polymerase II from (CG-rich) non-ZGA genes to (CG-poor) ZGA genes at the two-cell stage. Binds to regulatory DNA sequences containing a 5'-ACNCCTTTAATCCCAG-3' sequence motif. Most maternal and zygotic Obox family proteins can compensate for one another. In addition to its role in ZGA, promotes embryonic stem cell pluripotency. The chain is Oocyte-specific homeobox protein 1 from Mus musculus (Mouse).